Consider the following 290-residue polypeptide: Picrinine-N-methytransferase TMT4 (290 aa).

The interval 71-80 (MLDVGCGIGG) is SAM motif I. A Vacuolar targeting signal motif is present at residues 133–139 (DGTFDVV). The tract at residues 134-142 (GTFDVVFTI) is SAM motif II. The segment at 161-170 (VAAPGAAIVI) is SAM motif III.

The protein belongs to the class I-like SAM-binding methyltransferase superfamily. gTMT family. In terms of assembly, homodimer.

The protein localises to the vacuole membrane. It catalyses the reaction picrinine + S-adenosyl-L-methionine = ervincine + S-adenosyl-L-homocysteine + H(+). It functions in the pathway alkaloid biosynthesis; vindoline biosynthesis. S-adenosyl-L-methionine-dependent N-methyltransferase involved in the biosynthesis of biologically active monoterpenoid indole alkaloids (MIAs) natural products including vindoline. Catalyzes the conversion of picrinine to N-methylpicrinine (ervincine). The sequence is that of Picrinine-N-methytransferase TMT4 from Catharanthus roseus (Madagascar periwinkle).